Here is a 252-residue protein sequence, read N- to C-terminus: Carbohydrate deacetylase (252 aa).

Mg(2+)-binding residues include His-59 and His-122.

This sequence belongs to the YdjC deacetylase family. Homodimer. The cofactor is Mg(2+).

Its function is as follows. Probably catalyzes the deacetylation of acetylated carbohydrates an important step in the degradation of oligosaccharides. In Vibrio vulnificus (strain YJ016), this protein is Carbohydrate deacetylase.